We begin with the raw amino-acid sequence, 232 residues long: Phosphatidylserine decarboxylase proenzyme (232 aa).

Serine 190 serves as the catalytic Schiff-base intermediate with substrate; via pyruvic acid. Serine 190 carries the post-translational modification Pyruvic acid (Ser); by autocatalysis.

The protein belongs to the phosphatidylserine decarboxylase family. PSD-A subfamily. Heterodimer of a large membrane-associated beta subunit and a small pyruvoyl-containing alpha subunit. The cofactor is pyruvate. In terms of processing, is synthesized initially as an inactive proenzyme. Formation of the active enzyme involves a self-maturation process in which the active site pyruvoyl group is generated from an internal serine residue via an autocatalytic post-translational modification. Two non-identical subunits are generated from the proenzyme in this reaction, and the pyruvate is formed at the N-terminus of the alpha chain, which is derived from the carboxyl end of the proenzyme. The post-translation cleavage follows an unusual pathway, termed non-hydrolytic serinolysis, in which the side chain hydroxyl group of the serine supplies its oxygen atom to form the C-terminus of the beta chain, while the remainder of the serine residue undergoes an oxidative deamination to produce ammonia and the pyruvoyl prosthetic group on the alpha chain.

Its subcellular location is the cell membrane. The enzyme catalyses a 1,2-diacyl-sn-glycero-3-phospho-L-serine + H(+) = a 1,2-diacyl-sn-glycero-3-phosphoethanolamine + CO2. It functions in the pathway phospholipid metabolism; phosphatidylethanolamine biosynthesis; phosphatidylethanolamine from CDP-diacylglycerol: step 2/2. Functionally, catalyzes the formation of phosphatidylethanolamine (PtdEtn) from phosphatidylserine (PtdSer). The chain is Phosphatidylserine decarboxylase proenzyme from Cereibacter sphaeroides (strain ATCC 17025 / ATH 2.4.3) (Rhodobacter sphaeroides).